Consider the following 122-residue polypeptide: Protein FAM223A (122 aa).

Belongs to the FAM223 family.

The polypeptide is Protein FAM223A (FAM223A) (Homo sapiens (Human)).